A 432-amino-acid chain; its full sequence is Trigger factor (432 aa).

Residues 161-246 enclose the PPIase FKBP-type domain; sequence GTRATINFVG…VVKVESRELP (86 aa).

The protein belongs to the FKBP-type PPIase family. Tig subfamily.

The protein localises to the cytoplasm. It catalyses the reaction [protein]-peptidylproline (omega=180) = [protein]-peptidylproline (omega=0). In terms of biological role, involved in protein export. Acts as a chaperone by maintaining the newly synthesized protein in an open conformation. Functions as a peptidyl-prolyl cis-trans isomerase. The protein is Trigger factor of Aliivibrio fischeri (strain ATCC 700601 / ES114) (Vibrio fischeri).